The following is a 477-amino-acid chain: Dihydrolipoyl dehydrogenase (477 aa).

FAD is bound by residues 34-49, Lys58, and Gly122; that span reads EKYK…GGTC. The cysteines at positions 49 and 54 are disulfide-linked. NAD(+)-binding positions include 188–192, Glu211, Val245, and 276–279; these read GAGVI and AVGR. Residues Asp319 and Ala327 each contribute to the FAD site. His451 acts as the Proton acceptor in catalysis.

The protein belongs to the class-I pyridine nucleotide-disulfide oxidoreductase family. Homodimer. FAD is required as a cofactor.

It localises to the cytoplasm. It catalyses the reaction N(6)-[(R)-dihydrolipoyl]-L-lysyl-[protein] + NAD(+) = N(6)-[(R)-lipoyl]-L-lysyl-[protein] + NADH + H(+). Its function is as follows. The pyruvate dehydrogenase complex catalyzes the overall conversion of pyruvate to acetyl-CoA and CO(2). It contains multiple copies of three enzymatic components: pyruvate dehydrogenase (E1), dihydrolipoamide acetyltransferase (E2) and lipoamide dehydrogenase (E3). The protein is Dihydrolipoyl dehydrogenase of Azotobacter vinelandii.